A 193-amino-acid chain; its full sequence is Putative anthranilate synthase component II (193 aa).

Residues 2 to 193 enclose the Glutamine amidotransferase type-1 domain; that stretch reads KLLIINNHDS…WLAIPPTTNP (192 aa). Catalysis depends on residues C78, H168, and E170.

As to quaternary structure, tetramer of two components I and two components II.

The enzyme catalyses chorismate + L-glutamine = anthranilate + pyruvate + L-glutamate + H(+). It participates in amino-acid biosynthesis; L-tryptophan biosynthesis; L-tryptophan from chorismate: step 1/5. In Haemophilus influenzae (strain ATCC 51907 / DSM 11121 / KW20 / Rd), this protein is Putative anthranilate synthase component II.